The primary structure comprises 316 residues: Methionyl-tRNA formyltransferase (316 aa).

Residue 113-116 (SLLP) participates in (6S)-5,6,7,8-tetrahydrofolate binding.

It belongs to the Fmt family.

It catalyses the reaction L-methionyl-tRNA(fMet) + (6R)-10-formyltetrahydrofolate = N-formyl-L-methionyl-tRNA(fMet) + (6S)-5,6,7,8-tetrahydrofolate + H(+). Its function is as follows. Attaches a formyl group to the free amino group of methionyl-tRNA(fMet). The formyl group appears to play a dual role in the initiator identity of N-formylmethionyl-tRNA by promoting its recognition by IF2 and preventing the misappropriation of this tRNA by the elongation apparatus. The chain is Methionyl-tRNA formyltransferase from Proteus mirabilis (strain HI4320).